Reading from the N-terminus, the 144-residue chain is Subtilisin inhibitor (144 aa).

Low complexity predominate over residues 1–12; the sequence is MRNTGAGPSPSV. The interval 1–25 is disordered; it reads MRNTGAGPSPSVSRPPPSAAPLSGA. A signal peptide spans 1–31; that stretch reads MRNTGAGPSPSVSRPPPSAAPLSGAALAAPG. Repeats lie at residues 33–37 and 39–43; these read APSAL. 2 cysteine pairs are disulfide-bonded: Cys66/Cys81 and Cys102/Cys132.

Belongs to the protease inhibitor I16 (SSI) family. Homodimer.

The protein resides in the secreted. Functionally, strong inhibitor of bacterial serine proteases such as subtilisin. The protein is Subtilisin inhibitor (ssi) of Streptomyces albogriseolus.